A 312-amino-acid polypeptide reads, in one-letter code: Isoflavone reductase homolog (312 aa).

NADP(+) is bound by residues 10 to 16, Arg-35, and Lys-44; that span reads GGTGYVG. Lys-138 serves as the catalytic Proton acceptor. Arg-142 provides a ligand contact to NADP(+). His-270 serves as a coordination point for substrate.

This sequence belongs to the NmrA-type oxidoreductase family. Isoflavone reductase subfamily.

This chain is Isoflavone reductase homolog, found in Lupinus albus (White lupine).